The following is a 370-amino-acid chain: Glutamate 5-kinase (370 aa).

Lysine 12 lines the ATP pocket. The substrate site is built by serine 52, aspartate 139, and asparagine 151. Residues 171–172 (SD) and 213–219 (TGGMFTK) each bind ATP. The PUA domain maps to 278–356 (QAHIAVDAGA…SDIESILGYS (79 aa)).

The protein belongs to the glutamate 5-kinase family.

The protein resides in the cytoplasm. The catalysed reaction is L-glutamate + ATP = L-glutamyl 5-phosphate + ADP. Its pathway is amino-acid biosynthesis; L-proline biosynthesis; L-glutamate 5-semialdehyde from L-glutamate: step 1/2. Functionally, catalyzes the transfer of a phosphate group to glutamate to form L-glutamate 5-phosphate. The chain is Glutamate 5-kinase from Herpetosiphon aurantiacus (strain ATCC 23779 / DSM 785 / 114-95).